Consider the following 556-residue polypeptide: uncharacterized protein (556 aa).

The tract at residues 69 to 129 (RRGHTSGHAS…SSARSSSTSG (61 aa)) is disordered. Composition is skewed to low complexity over residues 74-85 (SGHASEHTSSSR) and 93-129 (SMSS…STSG). Residues 379–399 (LGLYIFIGVLLGLIGVIGLFI) form a helical membrane-spanning segment. The segment at 498–541 (CTICLCEYSEESPLYRELPCHHIFHPACIDPYLLKNSDLCPLCK) adopts an RING-type; atypical zinc-finger fold.

It localises to the vacuole membrane. Its subcellular location is the cell membrane. This is an uncharacterized protein from Schizosaccharomyces pombe (strain 972 / ATCC 24843) (Fission yeast).